We begin with the raw amino-acid sequence, 440 residues long: Thymidine phosphorylase (440 aa).

It belongs to the thymidine/pyrimidine-nucleoside phosphorylase family. Homodimer.

The enzyme catalyses thymidine + phosphate = 2-deoxy-alpha-D-ribose 1-phosphate + thymine. It participates in pyrimidine metabolism; dTMP biosynthesis via salvage pathway; dTMP from thymine: step 1/2. The enzymes which catalyze the reversible phosphorolysis of pyrimidine nucleosides are involved in the degradation of these compounds and in their utilization as carbon and energy sources, or in the rescue of pyrimidine bases for nucleotide synthesis. This Salmonella choleraesuis (strain SC-B67) protein is Thymidine phosphorylase.